A 259-amino-acid chain; its full sequence is Dysbindin domain-containing protein 2 (259 aa).

Disordered stretches follow at residues 27-56 (SCERVSPPPPLPHFRLPPLPRSRLPGPVSR) and 174-259 (ADVF…GACS). Residues 32–46 (SPPPPLPHFRLPPLP) are compositionally biased toward pro residues. The segment covering 205–223 (TSDRTTSRTSSSSSSDSST) has biased composition (low complexity). Serine 217 and serine 218 each carry phosphoserine. A Phosphothreonine modification is found at threonine 237. Serine 242 carries the phosphoserine modification.

The protein belongs to the dysbindin family. As to quaternary structure, monomer. Interacts with CSNK1D and CSNK1E. As to expression, detected in brain.

In terms of biological role, may modulate the activity of casein kinase-1. Inhibits CSNK1D autophosphorylation (in vitro). This Homo sapiens (Human) protein is Dysbindin domain-containing protein 2 (DBNDD2).